The primary structure comprises 338 residues: Eukaryotic translation initiation factor 3 subunit H (338 aa).

Positions 22-154 (VQCDGLAVMK…LKAYRLTPQA (133 aa)) constitute an MPN domain.

The protein belongs to the eIF-3 subunit H family. Component of the eukaryotic translation initiation factor 3 (eIF-3) complex. The eIF-3 complex interacts with pix. Interacts with mxt.

It is found in the cytoplasm. Its function is as follows. Component of the eukaryotic translation initiation factor 3 (eIF-3) complex, which is involved in protein synthesis of a specialized repertoire of mRNAs and, together with other initiation factors, stimulates binding of mRNA and methionyl-tRNAi to the 40S ribosome. The eIF-3 complex specifically targets and initiates translation of a subset of mRNAs involved in cell proliferation. The chain is Eukaryotic translation initiation factor 3 subunit H from Drosophila melanogaster (Fruit fly).